Here is a 288-residue protein sequence, read N- to C-terminus: Bifunctional protein FolD (288 aa).

NADP(+) is bound by residues 166–168 and Ile232; that span reads GAS.

Belongs to the tetrahydrofolate dehydrogenase/cyclohydrolase family. As to quaternary structure, homodimer.

It catalyses the reaction (6R)-5,10-methylene-5,6,7,8-tetrahydrofolate + NADP(+) = (6R)-5,10-methenyltetrahydrofolate + NADPH. It carries out the reaction (6R)-5,10-methenyltetrahydrofolate + H2O = (6R)-10-formyltetrahydrofolate + H(+). Its pathway is one-carbon metabolism; tetrahydrofolate interconversion. Its function is as follows. Catalyzes the oxidation of 5,10-methylenetetrahydrofolate to 5,10-methenyltetrahydrofolate and then the hydrolysis of 5,10-methenyltetrahydrofolate to 10-formyltetrahydrofolate. This is Bifunctional protein FolD from Citrobacter koseri (strain ATCC BAA-895 / CDC 4225-83 / SGSC4696).